The sequence spans 198 residues: Protein FAM219B (198 aa).

2 disordered regions span residues 1-58 (MATA…KRGP) and 83-146 (RRKG…EQVN). Phosphoserine occurs at positions 14, 91, 125, and 127. A compositionally biased stretch (polar residues) spans 134–146 (RYSSGYSSAEQVN).

This sequence belongs to the FAM219 family.

The sequence is that of Protein FAM219B (FAM219B) from Homo sapiens (Human).